The following is a 190-amino-acid chain: Potassium-transporting ATPase KdpC subunit (190 aa).

A helical transmembrane segment spans residues 7–27 (PALLMLLVWTLITGVFYPVLV).

The protein belongs to the KdpC family. The system is composed of three essential subunits: KdpA, KdpB and KdpC.

It localises to the cell inner membrane. Its function is as follows. Part of the high-affinity ATP-driven potassium transport (or Kdp) system, which catalyzes the hydrolysis of ATP coupled with the electrogenic transport of potassium into the cytoplasm. This subunit acts as a catalytic chaperone that increases the ATP-binding affinity of the ATP-hydrolyzing subunit KdpB by the formation of a transient KdpB/KdpC/ATP ternary complex. This Methylococcus capsulatus (strain ATCC 33009 / NCIMB 11132 / Bath) protein is Potassium-transporting ATPase KdpC subunit.